We begin with the raw amino-acid sequence, 284 residues long: RNA polymerase sigma factor RpoH (284 aa).

The tract at residues 53-122 (LILSHLRFVV…IHEYVLRNWR (70 aa)) is sigma-70 factor domain-2. Residues 77–80 (DLIQ) carry the Interaction with polymerase core subunit RpoC motif. The interval 228 to 280 (AMQGLDERSQDIIRARWLDEDNKSTLQELADRYGVSAERVRQLEKNAMKKLRA) is sigma-70 factor domain-4. Positions 253–272 (LQELADRYGVSAERVRQLEK) form a DNA-binding region, H-T-H motif.

This sequence belongs to the sigma-70 factor family. RpoH subfamily. As to quaternary structure, interacts with the RNA polymerase core enzyme.

It localises to the cytoplasm. Sigma factors are initiation factors that promote the attachment of RNA polymerase to specific initiation sites and are then released. This sigma factor is involved in regulation of expression of heat shock genes. This is RNA polymerase sigma factor RpoH from Escherichia coli O6:H1 (strain CFT073 / ATCC 700928 / UPEC).